Here is a 51-residue protein sequence, read N- to C-terminus: Large ribosomal subunit protein eL39x (51 aa).

Belongs to the eukaryotic ribosomal protein eL39 family.

The polypeptide is Large ribosomal subunit protein eL39x (RPL39C) (Oryza sativa subsp. japonica (Rice)).